We begin with the raw amino-acid sequence, 430 residues long: Adenylosuccinate synthetase (430 aa).

GTP contacts are provided by residues 12 to 18 (GDEGKGK) and 40 to 42 (GHT). Catalysis depends on D13, which acts as the Proton acceptor. 2 residues coordinate Mg(2+): D13 and G40. IMP contacts are provided by residues 13-16 (DEGK), 38-41 (NAGH), T128, R142, Q223, T238, and R302. H41 acts as the Proton donor in catalysis. 298–304 (TTTGRPR) lines the substrate pocket. Residues R304, 330-332 (SID), and 412-414 (SVG) contribute to the GTP site.

Belongs to the adenylosuccinate synthetase family. In terms of assembly, homodimer. Mg(2+) is required as a cofactor.

The protein localises to the cytoplasm. The enzyme catalyses IMP + L-aspartate + GTP = N(6)-(1,2-dicarboxyethyl)-AMP + GDP + phosphate + 2 H(+). Its pathway is purine metabolism; AMP biosynthesis via de novo pathway; AMP from IMP: step 1/2. Plays an important role in the de novo pathway of purine nucleotide biosynthesis. Catalyzes the first committed step in the biosynthesis of AMP from IMP. This is Adenylosuccinate synthetase from Streptococcus pyogenes serotype M3 (strain ATCC BAA-595 / MGAS315).